Reading from the N-terminus, the 302-residue chain is MHYPTALLFLILANGAQAFRICAFNAQRLTLAKVAREQVMDTLVRILARCDIMVLQEVVDSSGSAIPLLLRELNRFDGSGPYSTLSSPQLGRSTYMETYVYFYRSHKTQVLSSYVYNDEDDVFAREPFVAQFSLPSNVLPSLVLVPLHTTPKAVEKELNALYDVFLEVSQHWQSKDVILLGDFNADCASLTKKRLDKLELRTEPGFHWVIADGEDTTVRASTHCTYDRVVLHGERCRSLLHTAAAFDFPTSFQLTEEEALNISDHYPVEVELKLSQAHSVQPLSLTVLLLLSLLSPQLCPAA.

Residues 1–18 form the signal peptide; sequence MHYPTALLFLILANGAQA. Residues Glu97 and His148 contribute to the active site. A disulfide bridge links Cys187 with Cys224. N-linked (GlcNAc...) asparagine glycosylation is present at Asn261.

It belongs to the DNase I family. As to expression, highest levels in skeletal and cardiac muscles. Detectable in all other tissues tested except brain.

Its subcellular location is the endoplasmic reticulum. The protein is Deoxyribonuclease-1-like 1 (DNASE1L1) of Homo sapiens (Human).